The sequence spans 296 residues: 4-hydroxybenzoate octaprenyltransferase (296 aa).

8 helical membrane-spanning segments follow: residues proline 28 to glycine 48, valine 55 to phenylalanine 75, alanine 102 to alanine 122, threonine 145 to alanine 167, serine 174 to valine 196, valine 219 to phenylalanine 239, leucine 241 to tryptophan 261, and phenylalanine 275 to leucine 295.

This sequence belongs to the UbiA prenyltransferase family. Mg(2+) serves as cofactor.

It localises to the cell inner membrane. It catalyses the reaction all-trans-octaprenyl diphosphate + 4-hydroxybenzoate = 4-hydroxy-3-(all-trans-octaprenyl)benzoate + diphosphate. Its pathway is cofactor biosynthesis; ubiquinone biosynthesis. In terms of biological role, catalyzes the prenylation of para-hydroxybenzoate (PHB) with an all-trans polyprenyl group. Mediates the second step in the final reaction sequence of ubiquinone-8 (UQ-8) biosynthesis, which is the condensation of the polyisoprenoid side chain with PHB, generating the first membrane-bound Q intermediate 3-octaprenyl-4-hydroxybenzoate. The sequence is that of 4-hydroxybenzoate octaprenyltransferase from Pseudomonas entomophila (strain L48).